The chain runs to 465 residues: BTB/POZ and MATH domain-containing protein 4 (465 aa).

Residues 12-40 form a disordered region; sequence LQRQNPLQKSEQQRRNFEMPSPPTTTSLS. Residues 46–180 enclose the MATH domain; sequence NGSHSFTIKG…DDCLKINCTV (135 aa). The BTB domain maps to 216–282; it reads SDITFNVSGE…IYKDALIEDA (67 aa). 2 disordered regions span residues 395–429 and 441–465; these read SGGG…INGG and VNAN…ELED. Low complexity predominate over residues 442 to 458; the sequence is NANGSGRNNNDNNNSDD.

It belongs to the Tdpoz family. As to quaternary structure, interacts with RAP2-4. Binds to MYB56 at the promoter of FLOWERING LOCUS T (FT). Ubiquitous.

The protein resides in the cytoplasm. The protein operates within protein modification; protein ubiquitination. In terms of biological role, may act as a substrate-specific adapter of an E3 ubiquitin-protein ligase complex (CUL3-RBX1-BTB) which mediates the ubiquitination and subsequent proteasomal degradation of target proteins. This is BTB/POZ and MATH domain-containing protein 4 (BPM4) from Arabidopsis thaliana (Mouse-ear cress).